The sequence spans 395 residues: Acid ceramidase (395 aa).

Residues 1-21 form the signal peptide; it reads MPGRSCVALVLLAAAVSCAVA. An intrachain disulfide couples cysteine 31 to cysteine 340. Catalysis depends on cysteine 143, which acts as the Nucleophile. Asparagine 173, asparagine 195, asparagine 259, asparagine 286, asparagine 342, and asparagine 348 each carry an N-linked (GlcNAc...) asparagine glycan. A disulfide bridge links cysteine 388 with cysteine 392.

The protein belongs to the acid ceramidase family. In terms of assembly, heterodimer; disulfide-linked. The heterodimer is composed of the disulfide-linked alpha and beta chains produced by autocatalytic cleavage of the precursor. Isoform 2: May interact with NR5A1 in the nucleus; the direct interaction would negatively regulate NR5A1 transcriptional activity. N-glycosylated. In terms of processing, proteolytically cleaved into two chains alpha and beta that remain associated via a disulfide bond. Cleavage gives rise to a conformation change that activates the enzyme. The same catalytic Cys residue mediates the autoproteolytic cleavage and subsequent hydrolysis of lipid substrates. The beta chain may undergo an additional C-terminal processing. As to expression, broadly expressed with higher expression in heart.

The protein resides in the lysosome. Its subcellular location is the secreted. The protein localises to the nucleus. It is found in the cytoplasm. It carries out the reaction an N-acylsphing-4-enine + H2O = sphing-4-enine + a fatty acid. The catalysed reaction is a beta-D-glucosyl-(1&lt;-&gt;1')-N-acylsphing-4-enine + H2O = beta-D-glucosyl-(1&lt;-&gt;1)-sphing-4-enine + a fatty acid. The enzyme catalyses a globoside Gb3Cer + H2O = a lysoGb3 + a fatty acid. It catalyses the reaction a globoside Gb3Cer (d18:1(4E)) + H2O = a lysoGb3(d18:1(4E)) + a fatty acid. It carries out the reaction N-dodecanoylsphing-4-enine + H2O = dodecanoate + sphing-4-enine. The catalysed reaction is N-tetradecanoylsphing-4-enine + H2O = tetradecanoate + sphing-4-enine. The enzyme catalyses N-hexadecanoylsphing-4-enine + H2O = sphing-4-enine + hexadecanoate. It catalyses the reaction N-octadecanoylsphing-4-enine + H2O = sphing-4-enine + octadecanoate. It carries out the reaction N-dodecanoyl-(4R)-hydroxysphinganine + H2O = (4R)-hydroxysphinganine + dodecanoate. The catalysed reaction is N-(dodecanoyl)-sphinganine + H2O = dodecanoate + sphinganine. The enzyme catalyses N-(acetyl)-sphing-4-enine + H2O = sphing-4-enine + acetate. It catalyses the reaction N-(hexanoyl)sphing-4-enine + H2O = hexanoate + sphing-4-enine. It carries out the reaction N-octanoylsphing-4-enine + H2O = octanoate + sphing-4-enine. The catalysed reaction is N-(9Z-octadecenoyl)-sphing-4-enine + H2O = sphing-4-enine + (9Z)-octadecenoate. The enzyme catalyses N-dodecanoylethanolamine + H2O = dodecanoate + ethanolamine. It functions in the pathway lipid metabolism; sphingolipid metabolism. Activated by Ca(2+), Mg(2+) and Na(+) cations. Inhibited by Zn(2+). Phosphatidylserine and phosphatidic acid stimulate while cardiolipin, phosphatidylcholine, lysophosphatidylcholine, phosphatidylethanolamine, phosphatidylinositol and sphingomyelin inhibit the reverse ceramide synthase activity. Phosphatidic acid, phosphatidylinositol and C16-ceramide inhibit the ceramidase/hydrolase activity. Its function is as follows. Lysosomal ceramidase that hydrolyzes sphingolipid ceramides into sphingosine and free fatty acids at acidic pH. Ceramides, sphingosine, and its phosphorylated form sphingosine-1-phosphate are bioactive lipids that mediate cellular signaling pathways regulating several biological processes including cell proliferation, apoptosis and differentiation. Has a higher catalytic efficiency towards C12-ceramides versus other ceramides. Also catalyzes the reverse reaction allowing the synthesis of ceramides from fatty acids and sphingosine. For the reverse synthetic reaction, the natural sphingosine D-erythro isomer is more efficiently utilized as a substrate compared to D-erythro-dihydrosphingosine and D-erythro-phytosphingosine, while the fatty acids with chain lengths of 12 or 14 carbons are the most efficiently used. Also has an N-acylethanolamine hydrolase activity. By regulating the levels of ceramides, sphingosine and sphingosine-1-phosphate in the epidermis, mediates the calcium-induced differentiation of epidermal keratinocytes. Also indirectly regulates tumor necrosis factor/TNF-induced apoptosis. By regulating the intracellular balance between ceramides and sphingosine, in adrenocortical cells, probably also acts as a regulator of steroidogenesis. May directly regulate steroidogenesis by binding the nuclear receptor NR5A1 and negatively regulating its transcriptional activity. The sequence is that of Acid ceramidase from Homo sapiens (Human).